The following is a 1604-amino-acid chain: MDPSRETFDGSTRDSYKPPNGAEMMGQSELNTQNRIPYNTSANNRNWQIPLYWQQRGNEFQASPPPPLGYVTPEYGATGTPVNANNASRVDYATTAANVPEEYANDYSSELAYIHNVNDMPHVDGLSNHSPATQPDLFETPAQSDPILFSSYPHAAQARVDPSISKDLYNMVPRPDANTVSPHAARSASSLPVPKEASETPFRDASTDLFDEHAHAAPMHSSISISTLLSDSDRYEPHVSLTENISPVMAPSIDARLSQTILRGLPPAQKLSPNSSQSQITHNRRKHKLPLNATTNNSVVLTPDTSPLLDSDEVVSDDDSNEQQTMMMKFNYLQHLRNKRDEAVHAEKRRLLDIRGSIHDRLVCRYENRYNKLHASEYNHHHDWAVRQAIREEVAAVEAAKIRADEEKKKKEREEQVRLLQESADKDAEMNEASTATSENEDLKDDLSLADLSSKKTANSQATENNNTPSKAKVKAESKVRSKAKSDKSRAKLSSDTNKDSEKNDNNDASLQSAGVASDGESSPETPLTKASKSKKAKASKLANDTSKNANGETKSTPKKSKKKTSKAQQEANSTTAEGKEKLSGDSTETGNSTNKEASTEDTKANATASAPNKKKKTVETLQQQVIKEIARKEIPRVYKIIQQNQYNRSTNARKTSQLCGREARRWQFRTIKNNKDMQTKAKRAMRETMVFWKRNERVERDLRKKAEREALDRAKKEEELRESRRQARKLDFLITQTELYSHFVGRKMDREQDLPSATNTASVSEINFDSDEEEDIRRLAVESAQEAVQKAREHSQLFDANRQQSPNNSSSDMNEGEMNFQNPTLVNAFEVKQPKMLMCKLKEYQLKGLNWLANLYEQGINGILADEMGLGKTVQSISVMAYLAETHNIWGPFLVIAPASTLHNWQQEITRFVPKLKCIPYWGSTKDRKILRKFWCRKNMTYDENSPFHVVVTSYQLVVLDAQYFQSVKWQYMILDEAQAIKSSSSSRWKSLLAFKCRNRLLLTGTPIQNTMQELWALLHFIMPSLFDSHNEFSEWFSKDIESHAQSNTQLNEQQLKRLHMILKPFMLRRVKKNVQSELGEKIEKEVYCDLTQRQKILYQALRRQISIAELLEKAILGGDDTVASIMNLVMQFRKVCNHPDLFEREDVRSPLSLATWSKSIYINREGNFLDVPYNTRNFITFSIPRLLYEQGGILSVPGLNTSRGFETKYLYNLMNIWNPEYTNDSIKSNPEGSPFSWLRFVDESPQTLFQTFQNPVVHYLDEAEASSSLKEEQLCRQEFCYGKDYSNVRKMLLLPKSITKVDVLGSDFKEDSPFYHLTHVLEESDSQLDLTLLDSVLVQRASAPPIDIYCPGSRQFTVLQSRFQRDHLWSHYLYQPLKGEEDLIINNQAVSKLPIPRKPLLPSFGIAKGSYSNVRIPSMLRFIADSGKLSKLDKLLVELKANDHRVLIYFQMTRMIDLMEEYLTFRQYKYLRLDGSSKISQRRDMVTEWQTRPELFVFLLSTRAGGLGINLTAADTVIFYDSDWNPSIDSQAMDRAHRIGQQKQVTVYRFITRGTIEERIVIRAKEKEEVQKVVISGGETRPTKQMDLKGNSREMVSWLLEE.

The segment covering 1 to 16 (MDPSRETFDGSTRDSY) has biased composition (basic and acidic residues). Disordered regions lie at residues 1 to 38 (MDPS…RIPY), 174 to 201 (RPDA…SETP), 266 to 285 (PPAQ…HNRR), 297 to 316 (NSVV…EVVS), and 406 to 620 (EEKK…KTVE). A compositionally biased stretch (polar residues) spans 28-38 (SELNTQNRIPY). At Thr-179 the chain carries Phosphothreonine. Positions 271–281 (LSPNSSQSQIT) are enriched in polar residues. Over residues 406 to 429 (EEKKKKEREEQVRLLQESADKDAE) the composition is skewed to basic and acidic residues. Residues 457–470 (TANSQATENNNTPS) show a composition bias toward polar residues. 2 stretches are compositionally biased toward basic and acidic residues: residues 474–490 (VKAE…DKSR) and 497–506 (TNKDSEKNDN). Composition is skewed to polar residues over residues 507–526 (NDAS…SPET) and 543–553 (ANDTSKNANGE). Ser-518 carries the phosphoserine modification. Positions 557–566 (TPKKSKKKTS) are enriched in basic residues. 2 stretches are compositionally biased toward polar residues: residues 568–577 (AQQEANSTTA) and 585–597 (GDST…TNKE). The DBINO domain occupies 626 to 751 (VIKEIARKEI…SHFVGRKMDR (126 aa)). Residues 792-820 (AREHSQLFDANRQQSPNNSSSDMNEGEMN) are disordered. The span at 802-820 (NRQQSPNNSSSDMNEGEMN) shows a compositional bias: polar residues. Residues 854–1026 (ANLYEQGING…WALLHFIMPS (173 aa)) enclose the Helicase ATP-binding domain. Residue 867-874 (DEMGLGKT) coordinates ATP. The DEAQ box signature appears at 977–980 (DEAQ). In terms of domain architecture, Helicase C-terminal spans 1433-1591 (KLDKLLVELK…TRPTKQMDLK (159 aa)).

Belongs to the SNF2/RAD54 helicase family. In terms of assembly, component of the INO80 chromatin-remodeling complex.

The protein localises to the nucleus. It carries out the reaction ATP + H2O = ADP + phosphate + H(+). Its function is as follows. ATPase component of the INO80 complex which remodels chromatin by shifting nucleosomes and is involved in DNA repair. The sequence is that of Chromatin-remodeling ATPase INO80 (ino80) from Schizosaccharomyces pombe (strain 972 / ATCC 24843) (Fission yeast).